We begin with the raw amino-acid sequence, 503 residues long: Probable protein kinase UbiB (503 aa).

The chain crosses the membrane as a helical span at residues 13 to 35 (TFYRYRLAGLCASLMGSGWICAL). The region spanning 120-491 (EFETEPIASA…QQRQSLWLAV (372 aa)) is the Protein kinase domain. ATP is bound by residues 126–134 (IASASIAQV) and Lys148. Asp283 acts as the Proton acceptor in catalysis. Residues 485-502 (QSLWLAVIAVVLLLILLL) form a helical membrane-spanning segment.

Belongs to the ABC1 family. UbiB subfamily.

It localises to the cell inner membrane. It participates in cofactor biosynthesis; ubiquinone biosynthesis [regulation]. In terms of biological role, is probably a protein kinase regulator of UbiI activity which is involved in aerobic coenzyme Q (ubiquinone) biosynthesis. In Neisseria meningitidis serogroup B (strain ATCC BAA-335 / MC58), this protein is Probable protein kinase UbiB.